The primary structure comprises 401 residues: Acetate kinase (401 aa).

Residue Asn-7 participates in Mg(2+) binding. Residue Lys-14 coordinates ATP. Arg-90 serves as a coordination point for substrate. The Proton donor/acceptor role is filled by Asp-147. ATP is bound by residues 207 to 211 (HLGNG), 282 to 284 (DFR), and 330 to 334 (GVGEN). Residue Glu-383 participates in Mg(2+) binding.

It belongs to the acetokinase family. In terms of assembly, homodimer. Mg(2+) is required as a cofactor. Requires Mn(2+) as cofactor.

It is found in the cytoplasm. The enzyme catalyses acetate + ATP = acetyl phosphate + ADP. The protein operates within metabolic intermediate biosynthesis; acetyl-CoA biosynthesis; acetyl-CoA from acetate: step 1/2. Functionally, catalyzes the formation of acetyl phosphate from acetate and ATP. Can also catalyze the reverse reaction. In Clostridium novyi (strain NT), this protein is Acetate kinase.